A 2697-amino-acid polypeptide reads, in one-letter code: Target of rapamycin homolog (2697 aa).

Positions 1 to 25 are disordered; that stretch reads MLQQHGISFQMNADRQNKAATTSNR. HEAT repeat units follow at residues 235-272, 649-687, 689-726, 731-768, 815-853, 863-900, and 1073-1110; these read LRVN…IVSQ, QTIY…PFLA, LAQP…LNPA, RLRL…QSPK, KNLK…STAY, SLLD…YTHK, and KYTG…LTHC. Residues 1438–2153 form the FAT domain; it reads VLGRWAEQTK…IYALTVASRS (716 aa). 2 disordered regions span residues 1945–1981 and 2017–2039; these read TVIS…PQPA and SNSS…PSNS. The segment covering 1969-1981 has biased composition (pro residues); the sequence is SPPPPAQKSPQPA. Over residues 2030 to 2039 the composition is skewed to polar residues; the sequence is PLSNDSPSNS. Residues 2332–2647 form the PI3K/PI4K catalytic domain; it reads FSSKMNVITS…TTDSIMETIK (316 aa). The G-loop stretch occupies residues 2338-2344; the sequence is VITSKQR. Positions 2512–2520 are catalytic loop; sequence GLGDRHPSN. The segment at 2532–2557 is activation loop; it reads HIDFGDCFEVAMLREKFPERVPFRLT. The tract at residues 2615 to 2635 is disordered; it reads DPKTRKDTGGRQNMAGAVLPS. In terms of domain architecture, FATC spans 2665–2697; the sequence is EPLQVTEQLAMLTEQATSPLNLCQSYIGWCPFW.

This sequence belongs to the PI3/PI4-kinase family. In terms of tissue distribution, ubiquitous. Expressed in all major tissues and organs, including the intestine, gonads and hypodermal cells. Expressed in neurons.

The protein localises to the nucleus. The enzyme catalyses L-seryl-[protein] + ATP = O-phospho-L-seryl-[protein] + ADP + H(+). It catalyses the reaction L-threonyl-[protein] + ATP = O-phospho-L-threonyl-[protein] + ADP + H(+). Serine/threonine-protein kinase that regulates the mRNA translation machinery, probably by modulating the activity of translation factors such as eIF-4G and eIF-2. It may have some protein kinase activity instead of lipid kinase activity. May play a role in P-granule degradation by autophagy in somatic cells during embryogenesis. Required, during larval development, for the establishment of the proper number of germline progenitors, probably upstream of rsks-1 and ife-1. Required for larval development. May act as a mediator of lifespan regulation by insulin signaling and nutrient sensing. In Caenorhabditis elegans, this protein is Target of rapamycin homolog.